The chain runs to 158 residues: Small ribosomal subunit protein uS7 (158 aa).

It belongs to the universal ribosomal protein uS7 family. Part of the 30S ribosomal subunit. Contacts proteins S9 and S11.

One of the primary rRNA binding proteins, it binds directly to 16S rRNA where it nucleates assembly of the head domain of the 30S subunit. Is located at the subunit interface close to the decoding center, probably blocks exit of the E-site tRNA. The polypeptide is Small ribosomal subunit protein uS7 (Parabacteroides distasonis (strain ATCC 8503 / DSM 20701 / CIP 104284 / JCM 5825 / NCTC 11152)).